A 257-amino-acid polypeptide reads, in one-letter code: Diphthine synthase (257 aa).

S-adenosyl-L-methionine is bound by residues leucine 9, aspartate 85, valine 88, 113–114 (SI), leucine 164, alanine 209, and histidine 234.

The protein belongs to the diphthine synthase family. Homodimer.

It catalyses the reaction 2-[(3S)-amino-3-carboxypropyl]-L-histidyl-[translation elongation factor 2] + 3 S-adenosyl-L-methionine = diphthine-[translation elongation factor 2] + 3 S-adenosyl-L-homocysteine + 3 H(+). It participates in protein modification; peptidyl-diphthamide biosynthesis. S-adenosyl-L-methionine-dependent methyltransferase that catalyzes the trimethylation of the amino group of the modified target histidine residue in translation elongation factor 2 (EF-2), to form an intermediate called diphthine. The three successive methylation reactions represent the second step of diphthamide biosynthesis. The polypeptide is Diphthine synthase (Methanocaldococcus jannaschii (strain ATCC 43067 / DSM 2661 / JAL-1 / JCM 10045 / NBRC 100440) (Methanococcus jannaschii)).